The primary structure comprises 426 residues: Serine--tRNA ligase (426 aa).

233-235 provides a ligand contact to L-serine; the sequence is TAE. 264–266 provides a ligand contact to ATP; sequence RSE. Glu-287 contributes to the L-serine binding site. 351–354 serves as a coordination point for ATP; the sequence is EISS. Position 387 (Ser-387) interacts with L-serine.

It belongs to the class-II aminoacyl-tRNA synthetase family. Type-1 seryl-tRNA synthetase subfamily. As to quaternary structure, homodimer. The tRNA molecule binds across the dimer.

The protein localises to the cytoplasm. It carries out the reaction tRNA(Ser) + L-serine + ATP = L-seryl-tRNA(Ser) + AMP + diphosphate + H(+). The enzyme catalyses tRNA(Sec) + L-serine + ATP = L-seryl-tRNA(Sec) + AMP + diphosphate + H(+). It participates in aminoacyl-tRNA biosynthesis; selenocysteinyl-tRNA(Sec) biosynthesis; L-seryl-tRNA(Sec) from L-serine and tRNA(Sec): step 1/1. Catalyzes the attachment of serine to tRNA(Ser). Is also able to aminoacylate tRNA(Sec) with serine, to form the misacylated tRNA L-seryl-tRNA(Sec), which will be further converted into selenocysteinyl-tRNA(Sec). The sequence is that of Serine--tRNA ligase from Pseudomonas syringae pv. tomato (strain ATCC BAA-871 / DC3000).